The chain runs to 80 residues: Small ribosomal subunit protein bS18 (80 aa).

This sequence belongs to the bacterial ribosomal protein bS18 family. As to quaternary structure, part of the 30S ribosomal subunit. Forms a tight heterodimer with protein bS6.

In terms of biological role, binds as a heterodimer with protein bS6 to the central domain of the 16S rRNA, where it helps stabilize the platform of the 30S subunit. This Staphylococcus carnosus (strain TM300) protein is Small ribosomal subunit protein bS18.